A 163-amino-acid chain; its full sequence is NADH-quinone oxidoreductase subunit I (163 aa).

4Fe-4S ferredoxin-type domains are found at residues 53–83 and 94–123; these read LRRYPNGEERCIACKLCEAICPAQAITIEAG and VRYDIDMVKCIYCGFCQEACPVDAIVEGPN. The [4Fe-4S] cluster site is built by Cys63, Cys66, Cys69, Cys73, Cys103, Cys106, Cys109, and Cys113.

Belongs to the complex I 23 kDa subunit family. As to quaternary structure, NDH-1 is composed of 14 different subunits. Subunits NuoA, H, J, K, L, M, N constitute the membrane sector of the complex. [4Fe-4S] cluster serves as cofactor.

The protein resides in the cell inner membrane. The catalysed reaction is a quinone + NADH + 5 H(+)(in) = a quinol + NAD(+) + 4 H(+)(out). Functionally, NDH-1 shuttles electrons from NADH, via FMN and iron-sulfur (Fe-S) centers, to quinones in the respiratory chain. The immediate electron acceptor for the enzyme in this species is believed to be ubiquinone. Couples the redox reaction to proton translocation (for every two electrons transferred, four hydrogen ions are translocated across the cytoplasmic membrane), and thus conserves the redox energy in a proton gradient. The sequence is that of NADH-quinone oxidoreductase subunit I from Brucella canis (strain ATCC 23365 / NCTC 10854 / RM-666).